Consider the following 429-residue polypeptide: Ribosomal RNA small subunit methyltransferase B (429 aa).

S-adenosyl-L-methionine is bound by residues 254 to 260 (CAAPGGK), D277, D303, and D322. The active-site Nucleophile is C375.

It belongs to the class I-like SAM-binding methyltransferase superfamily. RsmB/NOP family.

Its subcellular location is the cytoplasm. It catalyses the reaction cytidine(967) in 16S rRNA + S-adenosyl-L-methionine = 5-methylcytidine(967) in 16S rRNA + S-adenosyl-L-homocysteine + H(+). In terms of biological role, specifically methylates the cytosine at position 967 (m5C967) of 16S rRNA. This Serratia proteamaculans (strain 568) protein is Ribosomal RNA small subunit methyltransferase B.